The following is a 460-amino-acid chain: Histidinol dehydrogenase (460 aa).

3 residues coordinate substrate: Ser269, Gln291, and His294. Gln291 and His294 together coordinate Zn(2+). Residues Glu358 and His359 each act as proton acceptor in the active site. Residues His359, Asp392, Glu446, and His451 each coordinate substrate. Asp392 lines the Zn(2+) pocket. His451 contributes to the Zn(2+) binding site.

The protein belongs to the histidinol dehydrogenase family. Requires Zn(2+) as cofactor.

It catalyses the reaction L-histidinol + 2 NAD(+) + H2O = L-histidine + 2 NADH + 3 H(+). It participates in amino-acid biosynthesis; L-histidine biosynthesis; L-histidine from 5-phospho-alpha-D-ribose 1-diphosphate: step 9/9. Its function is as follows. Catalyzes the sequential NAD-dependent oxidations of L-histidinol to L-histidinaldehyde and then to L-histidine. The protein is Histidinol dehydrogenase of Rhodopirellula baltica (strain DSM 10527 / NCIMB 13988 / SH1).